A 162-amino-acid polypeptide reads, in one-letter code: Transcription elongation factor GreA (162 aa).

A coiled-coil region spans residues 9–38 (QGYKALEEELARLKSERPEIIQAIKEAREE).

It belongs to the GreA/GreB family.

Its function is as follows. Necessary for efficient RNA polymerase transcription elongation past template-encoded arresting sites. The arresting sites in DNA have the property of trapping a certain fraction of elongating RNA polymerases that pass through, resulting in locked ternary complexes. Cleavage of the nascent transcript by cleavage factors such as GreA or GreB allows the resumption of elongation from the new 3'terminus. GreA releases sequences of 2 to 3 nucleotides. In Desulfovibrio desulfuricans (strain ATCC 27774 / DSM 6949 / MB), this protein is Transcription elongation factor GreA.